The sequence spans 69 residues: Fumarase D (69 aa).

The protein belongs to the FumD family.

It carries out the reaction (S)-malate = fumarate + H2O. In vitro catalyzes the addition of water to fumarate, forming malate. Cannot catalyze the reverse reaction. Cannot use the cis-isomer maleate as substrate. In Shigella flexneri, this protein is Fumarase D.